Consider the following 130-residue polypeptide: L-ectoine synthase (130 aa).

Belongs to the ectoine synthase family.

The enzyme catalyses (2S)-4-acetamido-2-aminobutanoate = L-ectoine + H2O. Its pathway is amine and polyamine biosynthesis; ectoine biosynthesis; L-ectoine from L-aspartate 4-semialdehyde: step 3/3. Catalyzes the circularization of gamma-N-acetyl-alpha,gamma-diaminobutyric acid (ADABA) to ectoine (1,4,5,6-tetrahydro-2-methyl-4-pyrimidine carboxylic acid), which is an excellent osmoprotectant. In Desulfatibacillum aliphaticivorans, this protein is L-ectoine synthase.